The primary structure comprises 688 residues: Potassium-transporting ATPase ATP-binding subunit (688 aa).

A run of 4 helical transmembrane segments spans residues 34–54 (PVMF…LDIL), 62–82 (AMFT…ANMA), 219–239 (VALT…TATL), and 260–280 (VLVA…LSAI). Asp313 serves as the catalytic 4-aspartylphosphate intermediate. Residues Asp350, Glu354, 383 to 390 (FSAQTRMS), and Lys401 each bind ATP. Positions 524 and 528 each coordinate Mg(2+). 3 helical membrane-spanning segments follow: residues 594-614 (FAII…LNIM), 622-642 (AILS…PLAL), and 662-682 (IYGL…DLLL).

Belongs to the cation transport ATPase (P-type) (TC 3.A.3) family. Type IA subfamily. The system is composed of three essential subunits: KdpA, KdpB and KdpC.

It is found in the cell inner membrane. The enzyme catalyses K(+)(out) + ATP + H2O = K(+)(in) + ADP + phosphate + H(+). Part of the high-affinity ATP-driven potassium transport (or Kdp) system, which catalyzes the hydrolysis of ATP coupled with the electrogenic transport of potassium into the cytoplasm. This subunit is responsible for energy coupling to the transport system and for the release of the potassium ions to the cytoplasm. The polypeptide is Potassium-transporting ATPase ATP-binding subunit (Yersinia pestis bv. Antiqua (strain Antiqua)).